The chain runs to 52 residues: uncharacterized protein (52 aa).

This is an uncharacterized protein from Saccharomyces cerevisiae (strain ATCC 204508 / S288c) (Baker's yeast).